A 690-amino-acid polypeptide reads, in one-letter code: Eukaryotic translation initiation factor 3 subunit B (690 aa).

The tract at residues 1–37 is disordered; sequence MAKKKSEEQSSADANDSDYQEEPNFEDPPGFVDNISD. The span at 15-25 shows a compositional bias: acidic residues; that stretch reads NDSDYQEEPNF. In terms of domain architecture, RRM spans 57–141; it reads SVVVVDNIPK…HTFAVNLFTD (85 aa). 5 WD repeats span residues 207–246, 293–331, 334–369, 442–484, and 530–575; these read TRER…KIQK, DGMS…LLDL, IKIP…TLME, EIRE…KPSL, and PDHF…IKRT. The stretch at 595–645 forms a coiled coil; it reads EEKQKEIKKNLKKYYAAFEQKDRLRLTRASKELLEKRSQLRETFMEYRNKR.

This sequence belongs to the eIF-3 subunit B family. Component of the eukaryotic translation initiation factor 3 (eIF-3) complex. The eIF-3 complex interacts with pix. Interacts with mxt.

The protein localises to the cytoplasm. RNA-binding component of the eukaryotic translation initiation factor 3 (eIF-3) complex, which is involved in protein synthesis of a specialized repertoire of mRNAs and, together with other initiation factors, stimulates binding of mRNA and methionyl-tRNAi to the 40S ribosome. The eIF-3 complex specifically targets and initiates translation of a subset of mRNAs involved in cell proliferation. In Drosophila sechellia (Fruit fly), this protein is Eukaryotic translation initiation factor 3 subunit B.